The chain runs to 75 residues: Dermaseptin-SP5 (75 aa).

The first 22 residues, 1 to 22 (MAFLKKSLFLVLFLGLVSLSMC), serve as a signal peptide directing secretion. The propeptide occupies 23 to 45 (EEEKRENEVEEEQEDDEQSELRR). The disordered stretch occupies residues 26–46 (KRENEVEEEQEDDEQSELRRS). Acidic residues predominate over residues 30–40 (EVEEEQEDDEQ). P72 bears the Proline amide mark. Residues 74-75 (EQ) constitute a propeptide that is removed on maturation.

Belongs to the frog skin active peptide (FSAP) family. Dermaseptin subfamily. Expressed by the skin glands.

It localises to the secreted. Its subcellular location is the target cell membrane. Its function is as follows. Antimicrobial peptide with weak activity against Gram-positive and Gram-negative bacteria and fungi. Has been tested against E.coli (MIC=96.06-256 uM), S.aureus (MIC&gt;192.12 uM), K.pneumoniae (MIC&gt;189.00 uM) and C.albicans (MIC=384.24-1024 uM). Probably acts by disturbing membrane functions with its alpha-helical amphipathic structure. May penetrate bacterial membranes, but stay at the mammalian membrane surface. Does not show hemolytic activity. Does not interact at all with cardiolipin. This Agalychnis spurrelli (Gliding leaf frog) protein is Dermaseptin-SP5.